The primary structure comprises 450 residues: Phosphoglucosamine mutase (450 aa).

Residue serine 103 is the Phosphoserine intermediate of the active site. 4 residues coordinate Mg(2+): serine 103, aspartate 243, aspartate 245, and aspartate 247. Serine 103 is modified (phosphoserine).

Belongs to the phosphohexose mutase family. The cofactor is Mg(2+). Post-translationally, activated by phosphorylation.

It catalyses the reaction alpha-D-glucosamine 1-phosphate = D-glucosamine 6-phosphate. In terms of biological role, catalyzes the conversion of glucosamine-6-phosphate to glucosamine-1-phosphate. This Lactobacillus delbrueckii subsp. bulgaricus (strain ATCC 11842 / DSM 20081 / BCRC 10696 / JCM 1002 / NBRC 13953 / NCIMB 11778 / NCTC 12712 / WDCM 00102 / Lb 14) protein is Phosphoglucosamine mutase.